Consider the following 362-residue polypeptide: Probable dual-specificity RNA methyltransferase RlmN (362 aa).

The active-site Proton acceptor is the glutamate 99. Positions 105–341 (SPDRHTVCVS…VTVRKSQGAS (237 aa)) constitute a Radical SAM core domain. Cysteine 112 and cysteine 346 are joined by a disulfide. [4Fe-4S] cluster contacts are provided by cysteine 119, cysteine 123, and cysteine 126. S-adenosyl-L-methionine-binding positions include 171-172 (GE), serine 204, 227-229 (SLH), and asparagine 303. Catalysis depends on cysteine 346, which acts as the S-methylcysteine intermediate.

It belongs to the radical SAM superfamily. RlmN family. [4Fe-4S] cluster serves as cofactor.

The protein localises to the cytoplasm. It carries out the reaction adenosine(2503) in 23S rRNA + 2 reduced [2Fe-2S]-[ferredoxin] + 2 S-adenosyl-L-methionine = 2-methyladenosine(2503) in 23S rRNA + 5'-deoxyadenosine + L-methionine + 2 oxidized [2Fe-2S]-[ferredoxin] + S-adenosyl-L-homocysteine. It catalyses the reaction adenosine(37) in tRNA + 2 reduced [2Fe-2S]-[ferredoxin] + 2 S-adenosyl-L-methionine = 2-methyladenosine(37) in tRNA + 5'-deoxyadenosine + L-methionine + 2 oxidized [2Fe-2S]-[ferredoxin] + S-adenosyl-L-homocysteine. Specifically methylates position 2 of adenine 2503 in 23S rRNA and position 2 of adenine 37 in tRNAs. The chain is Probable dual-specificity RNA methyltransferase RlmN from Chlorobium phaeobacteroides (strain BS1).